A 210-amino-acid polypeptide reads, in one-letter code: Glutathione S-transferase-like protein FUS3 (210 aa).

One can recognise a GST N-terminal domain in the interval 1 to 74 (MPNARVFKIL…YVAQSGPQAS (74 aa)). In terms of domain architecture, GST C-terminal spans 80-206 (DAMSSAKIRQ…GKPNFIEKRR (127 aa)).

Belongs to the GST superfamily.

Its function is as follows. Glutathione S-transferase-like protein; part of the gene cluster that mediates the biosynthesis of the mycotoxin fusarin C. Within the cluster, FUS1, FUS2, FUS8 and FUS9 are sufficient for fusarin production. The other FUS cluster members are not essential for fusarin C biosynthesis. The sequence is that of Glutathione S-transferase-like protein FUS3 from Gibberella fujikuroi (strain CBS 195.34 / IMI 58289 / NRRL A-6831) (Bakanae and foot rot disease fungus).